A 447-amino-acid polypeptide reads, in one-letter code: Exodeoxyribonuclease 7 large subunit (447 aa).

This sequence belongs to the XseA family. Heterooligomer composed of large and small subunits.

It localises to the cytoplasm. It catalyses the reaction Exonucleolytic cleavage in either 5'- to 3'- or 3'- to 5'-direction to yield nucleoside 5'-phosphates.. Functionally, bidirectionally degrades single-stranded DNA into large acid-insoluble oligonucleotides, which are then degraded further into small acid-soluble oligonucleotides. The polypeptide is Exodeoxyribonuclease 7 large subunit (Pediococcus pentosaceus (strain ATCC 25745 / CCUG 21536 / LMG 10740 / 183-1w)).